Here is a 359-residue protein sequence, read N- to C-terminus: Tyrosine-protein phosphatase non-receptor type 7 (359 aa).

Residues 1 to 33 (MVQACEGRSRAQLPTLSLGADMTQPPPTKAPAK) are disordered. Residues 38-51 (LQERRGSSVALMLD) form an interaction with MAP kinases region. Residue S44 is modified to Phosphoserine. T66 carries the post-translational modification Phosphothreonine. Phosphoserine occurs at positions 93 and 143. The Tyrosine-protein phosphatase domain occupies 97–349 (LEEEFLKIPS…QFLHHTLALY (253 aa)). Residues D257, 290–296 (CSAGIGR), and Q334 each bind substrate. Residue C290 is the Phosphocysteine intermediate of the active site. Cysteine sulfenic acid (-SOH) is present on C290.

It belongs to the protein-tyrosine phosphatase family. Non-receptor class subfamily. Oxidized at active site cysteine. Treatment with pervanadate (vanadate and H(2)O(2)) or with antigen enhanced oxidation of active site cysteine. As to expression, expressed in bone marrow-derived mast cells.

It localises to the cytoplasm. It is found in the cytoskeleton. It catalyses the reaction O-phospho-L-tyrosyl-[protein] + H2O = L-tyrosyl-[protein] + phosphate. Inhibited upon FCER1A triggering. Functionally, may play a role in the regulation of T and B-lymphocyte development and signal transduction. The chain is Tyrosine-protein phosphatase non-receptor type 7 (Ptpn7) from Mus musculus (Mouse).